A 452-amino-acid polypeptide reads, in one-letter code: Neuromedin-K receptor (452 aa).

At 1–71 (MASVPTGENW…TNQFVQPSWR (71 aa)) the chain is on the extracellular side. 4 N-linked (GlcNAc...) asparagine glycosylation sites follow: asparagine 9, asparagine 23, asparagine 40, and asparagine 60. The chain crosses the membrane as a helical span at residues 72–94 (IALWSLAYGLVVAVAVFGNLIVI). Residues 95-104 (WIILAHKRMR) are Cytoplasmic-facing. The helical transmembrane segment at 105–126 (TVTNYFLVNLAFSDASVAAFNT) threads the bilayer. At 127-146 (LVNFIYGVHSEWYFGANYCR) the chain is on the extracellular side. Cysteine 145 and cysteine 220 are disulfide-bonded. Residues 147 to 168 (FQNFFPITAVFASIYSMTAIAV) form a helical membrane-spanning segment. Residues 169-188 (DRYMAIIDPLKPRLSATATK) are Cytoplasmic-facing. The helical transmembrane segment at 189–209 (IVIGSIWILAFLLAFPQCLYS) threads the bilayer. At 210 to 232 (KIKVMPGRTLCYVQWPEGPKQHF) the chain is on the extracellular side. Residues 233-257 (TYHIIVIILVYCFPLLIMGVTYTIV) traverse the membrane as a helical segment. The Cytoplasmic segment spans residues 258-286 (GITLWGGEIPGDTCDKYHEQLKAKRKVVK). A helical membrane pass occupies residues 287–308 (MMIIVVVTFAICWLPYHVYFIL). The Extracellular portion of the chain corresponds to 309–321 (TAIYQQLNRWKYI). Residues 322-346 (QQVYLASFWLAMSSTMYNPIIYCCL) form a helical membrane-spanning segment. At 347–452 (NKRFRAGFKR…SPYTSVDEYS (106 aa)) the chain is on the cytoplasmic side. Cysteine 361 is lipidated: S-palmitoyl cysteine. Residues 401–452 (DPSEGDPAKSSRKKRAVPRDPSANGCSHREFKSASTTSSFISSPYTSVDEYS) form a disordered region. Residues 433 to 452 (SASTTSSFISSPYTSVDEYS) show a composition bias toward low complexity.

Belongs to the G-protein coupled receptor 1 family. In terms of processing, the anchoring of this receptor to the plasma membrane is probably mediated by the palmitoylation of a cysteine residue.

It localises to the cell membrane. Its function is as follows. This is a receptor for the tachykinin neuropeptide neuromedin-K (neurokinin B). It is associated with G proteins that activate a phosphatidylinositol-calcium second messenger system. In Mus musculus (Mouse), this protein is Neuromedin-K receptor (Tacr3).